A 372-amino-acid chain; its full sequence is Glutamate 5-kinase (372 aa).

Lys-14 serves as a coordination point for ATP. Substrate contacts are provided by Ser-54, Asp-141, and Asn-153. Thr-173–Asp-174 contributes to the ATP binding site. The region spanning Arg-280 to Val-358 is the PUA domain.

The protein belongs to the glutamate 5-kinase family.

It is found in the cytoplasm. It catalyses the reaction L-glutamate + ATP = L-glutamyl 5-phosphate + ADP. The protein operates within amino-acid biosynthesis; L-proline biosynthesis; L-glutamate 5-semialdehyde from L-glutamate: step 1/2. Catalyzes the transfer of a phosphate group to glutamate to form L-glutamate 5-phosphate. This is Glutamate 5-kinase from Ectopseudomonas mendocina (strain ymp) (Pseudomonas mendocina).